Here is a 440-residue protein sequence, read N- to C-terminus: Trigger factor (440 aa).

One can recognise a PPIase FKBP-type domain in the interval 162–247 (GDRVTFDFTG…LKKIEKFQLP (86 aa)).

The protein belongs to the FKBP-type PPIase family. Tig subfamily.

The protein localises to the cytoplasm. It catalyses the reaction [protein]-peptidylproline (omega=180) = [protein]-peptidylproline (omega=0). In terms of biological role, involved in protein export. Acts as a chaperone by maintaining the newly synthesized protein in an open conformation. Functions as a peptidyl-prolyl cis-trans isomerase. This chain is Trigger factor, found in Hamiltonella defensa subsp. Acyrthosiphon pisum (strain 5AT).